The primary structure comprises 165 residues: uncharacterized protein (165 aa).

Residues 16–36 traverse the membrane as a helical segment; sequence ASISSILNFFFFYIMEYFVAV.

This sequence belongs to the asfivirus F165R family.

Its subcellular location is the host membrane. This is an uncharacterized protein from African swine fever virus (strain Badajoz 1971 Vero-adapted) (Ba71V).